The primary structure comprises 251 residues: Octanoyltransferase (251 aa).

One can recognise a BPL/LPL catalytic domain in the interval Ala29–Pro251. Residue Arg68 to His75 coordinates substrate. The tract at residues Ala137 to Asp174 is disordered. Substrate is bound by residues Ala184–Gly186 and Gly197–Ala199. Cys215 acts as the Acyl-thioester intermediate in catalysis.

It belongs to the LipB family.

It is found in the cytoplasm. It catalyses the reaction octanoyl-[ACP] + L-lysyl-[protein] = N(6)-octanoyl-L-lysyl-[protein] + holo-[ACP] + H(+). The protein operates within protein modification; protein lipoylation via endogenous pathway; protein N(6)-(lipoyl)lysine from octanoyl-[acyl-carrier-protein]: step 1/2. Its function is as follows. Catalyzes the transfer of endogenously produced octanoic acid from octanoyl-acyl-carrier-protein onto the lipoyl domains of lipoate-dependent enzymes. Lipoyl-ACP can also act as a substrate although octanoyl-ACP is likely to be the physiological substrate. The chain is Octanoyltransferase from Polaromonas sp. (strain JS666 / ATCC BAA-500).